We begin with the raw amino-acid sequence, 255 residues long: Adenosylcobinamide-GDP ribazoletransferase (255 aa).

The next 6 helical transmembrane spans lie at 43-63 (LVGTLLGLLCVLVYAFASLFF), 64-84 (PYQVAIVLMMAFSLLLTGAFH), 113-133 (IGTYGSATLTMALIGKFVFLT), 141-161 (FGLMIVVAYTLSRAVAATLIY), 195-215 (LAAISLGLGVGLLLILFAILF), and 234-254 (CLGGAQQLMELGIYLVLIAVV).

It belongs to the CobS family. The cofactor is Mg(2+).

The protein localises to the cell inner membrane. The catalysed reaction is alpha-ribazole + adenosylcob(III)inamide-GDP = adenosylcob(III)alamin + GMP + H(+). It carries out the reaction alpha-ribazole 5'-phosphate + adenosylcob(III)inamide-GDP = adenosylcob(III)alamin 5'-phosphate + GMP + H(+). It participates in cofactor biosynthesis; adenosylcobalamin biosynthesis; adenosylcobalamin from cob(II)yrinate a,c-diamide: step 7/7. Its function is as follows. Joins adenosylcobinamide-GDP and alpha-ribazole to generate adenosylcobalamin (Ado-cobalamin). Also synthesizes adenosylcobalamin 5'-phosphate from adenosylcobinamide-GDP and alpha-ribazole 5'-phosphate. This Vibrio vulnificus (strain CMCP6) protein is Adenosylcobinamide-GDP ribazoletransferase.